A 437-amino-acid polypeptide reads, in one-letter code: Epsilon-sarcoglycan (437 aa).

Over 1-317 (MQLPRWWELG…LKSRDYYTDF (317 aa)) the chain is Extracellular. Residue asparagine 200 is glycosylated (N-linked (GlcNAc...) asparagine). Residues 318–338 (LITLAVPSAVALVLFLILAYI) traverse the membrane as a helical segment. The Cytoplasmic portion of the chain corresponds to 339-437 (MCCRREGVEK…QQQTTGKWYP (99 aa)).

Belongs to the sarcoglycan alpha/epsilon family. Post-translationally, N-glycosylated. Ubiquitinated, leading to its degradation by the proteasome.

It localises to the cell membrane. It is found in the sarcolemma. The protein localises to the cytoplasm. Its subcellular location is the cytoskeleton. The protein resides in the cell projection. It localises to the dendrite. It is found in the golgi apparatus. Component of the sarcoglycan complex, a subcomplex of the dystrophin-glycoprotein complex which forms a link between the F-actin cytoskeleton and the extracellular matrix. In Pongo abelii (Sumatran orangutan), this protein is Epsilon-sarcoglycan.